The primary structure comprises 98 residues: Ferredoxin-3 (98 aa).

2 4Fe-4S ferredoxin-type domains span residues 18-47 (FVEA…LQAL) and 66-95 (VMSI…HSPL). Residues C27, C30, C33, C37, C75, C78, C81, and C85 each coordinate [4Fe-4S] cluster.

Homodimer. [4Fe-4S] cluster serves as cofactor.

Functionally, ferredoxins are iron-sulfur proteins that transfer electrons in a wide variety of metabolic reactions. The protein is Ferredoxin-3 (fdxB) of Trichormus variabilis (strain ATCC 29413 / PCC 7937) (Anabaena variabilis).